We begin with the raw amino-acid sequence, 148 residues long: Multiprotein-bridging factor 1c (148 aa).

One can recognise an HTH cro/C1-type domain in the interval 91–145 (IQKARLEKKMSQADLAKQINERTQVVQEYENGKAVPNQAVLAKMEKVLGVKLRGK). Positions 102-121 (QADLAKQINERTQVVQEYEN) form a DNA-binding region, H-T-H motif.

The protein belongs to the MBF1 family. As to quaternary structure, binds to TPS5. Expressed in leaves, roots, stems, flowers, siliques and shoots. Not detected in seeds.

It is found in the nucleus. It localises to the nucleolus. The protein localises to the cytoplasm. Transcriptional coactivator that stimulates transcriptional activity by bridging regulatory proteins and TBP, thereby recruiting TBP to promoters occupied by DNA-binding regulators. Involved in the tolerance to heat and osmotic stress by partially activating the ethylene-response signal transduction pathway. This is Multiprotein-bridging factor 1c (MBF1C) from Arabidopsis thaliana (Mouse-ear cress).